The sequence spans 397 residues: Inositol 3-kinase (397 aa).

Residues Ser-228, 278–281, and Asn-305 contribute to the ATP site; that span reads GAGD. Asp-281 (proton acceptor) is an active-site residue.

This sequence belongs to the carbohydrate kinase pfkB family. Expressed in roots, leaf blade shoots, leaf sheath shoots and panicles.

The enzyme catalyses myo-inositol + ATP = 1D-myo-inositol 3-phosphate + ADP + H(+). Kinase that phosphorylates myo-inositol to produce multiple myo-inositol monophosphates. Participates in phytic acid biosynthesis in developing seeds. Phytic acid is the primary storage form of phosphorus in cereal grains and other plant seeds. This chain is Inositol 3-kinase, found in Oryza sativa subsp. japonica (Rice).